The sequence spans 246 residues: MMPRMGPPSSSKQEPTMFMSFRNPQWPANFINRDNVLDYFCNQGNVFYEMNSCNQQIKMQNITNRSVDECLRNMQGIQYVLWYSQPPLYIVCKQRRNNATNVSPIAYYYVINGSVHQAPDMHTLVQSRLLGALEPLRNAFGEVTNYSRYNTAKGYYWEFKNKPSMKKKEEEKKEEDERKLEERSTNFQKARTMMLLNQLFTEMPADEALEKLDVKEEENPKPEEAPSASAVGEPKFAEPAARATTK.

Disordered regions lie at residues 165-186 and 207-246; these read MKKKEEEKKEEDERKLEERSTN and EALEKLDVKEEENPKPEEAPSASAVGEPKFAEPAARATTK. Basic and acidic residues-rich tracts occupy residues 166–184 and 208–224; these read KKKEEEKKEEDERKLEERS and ALEKLDVKEEENPKPEE.

Belongs to the Mediator complex subunit 6 family. In terms of assembly, component of the Mediator complex. Interacts with let-19/mdt-13. Interacts with RNA polymerase II. Interacts with mdt-28.

The protein localises to the nucleus. Its function is as follows. Component of the Mediator complex, a coactivator involved in the regulated transcription of nearly all RNA polymerase II-dependent genes. Mediator functions as a bridge to convey information from gene-specific regulatory proteins to the basal RNA polymerase II transcription machinery. Mediator is recruited to promoters by direct interactions with regulatory proteins and serves as a scaffold for the assembly of a functional preinitiation complex with RNA polymerase II and the general transcription factors. This Caenorhabditis briggsae protein is Mediator of RNA polymerase II transcription subunit 6 (mdt-6).